The sequence spans 404 residues: Pyruvate-flavodoxin oxidoreductase (404 aa).

It belongs to the pyruvate:ferredoxin/flavodoxin oxidoreductase family.

The enzyme catalyses oxidized [flavodoxin] + pyruvate + CoA + 2 H(+) = reduced [flavodoxin] + acetyl-CoA + CO2. In terms of biological role, oxidoreductase required for the transfer of electrons from pyruvate to flavodoxin, which reduces nitrogenase. This Nostoc sp. (strain ATCC 29151 / PCC 7119) (Anabaena sp.) protein is Pyruvate-flavodoxin oxidoreductase (nifJ).